The sequence spans 643 residues: Thioredoxin reductase 3 (643 aa).

Positions 1–53 (MERSPPQSPGPGKAGDAPNRRSGHVRGARVLSPPGRRARLSSPGPSRSSEARE) are disordered. The residue at position 26 (arginine 26) is an Asymmetric dimethylarginine; alternate. Position 26 is an omega-N-methylarginine; alternate (arginine 26). A phosphoserine mark is found at serine 41 and serine 42. A Glutaredoxin domain is found at 56-156 (RRHLVGLIER…KLLQEDLAYD (101 aa)). Residue 158–187 (DLIIIGGGSGGLSCAKEAAILGKKVMVLDF) coordinates FAD. Cysteine 203 and cysteine 208 are joined by a disulfide. Lysine 379 carries the post-translational modification N6-succinyllysine. Histidine 616 functions as the Proton acceptor in the catalytic mechanism. Positions 641-642 (CU) form a cross-link, cysteinyl-selenocysteine (Cys-Sec). Position 642 (selenocysteine 642) is a non-standard amino acid, selenocysteine.

Belongs to the class-I pyridine nucleotide-disulfide oxidoreductase family. In terms of assembly, homodimer. FAD serves as cofactor.

Its subcellular location is the cytoplasm. It localises to the nucleus. It is found in the microsome. The protein resides in the endoplasmic reticulum. It catalyses the reaction [thioredoxin]-dithiol + NADP(+) = [thioredoxin]-disulfide + NADPH + H(+). Its function is as follows. Displays thioredoxin reductase, glutaredoxin and glutathione reductase activities. Catalyzes disulfide bond isomerization. Promotes disulfide bond formation between GPX4 and various sperm proteins and may play a role in sperm maturation by promoting formation of sperm structural components. This Homo sapiens (Human) protein is Thioredoxin reductase 3.